The chain runs to 321 residues: Probable heme-iron transport system permease protein IsdF (321 aa).

9 consecutive transmembrane segments (helical) span residues 9-29 (LLFL…FVTG), 61-81 (ILIA…LQAA), 89-109 (ANII…MLFI), 114-134 (FYLP…IILL), 143-163 (VSMI…LEIL), 179-199 (IWSD…LTLL), 233-253 (VFLA…GIIV), 267-287 (LIPF…LLGR), and 294-314 (EIPA…YLIC).

The protein belongs to the binding-protein-dependent transport system permease family. FecCD subfamily.

The protein resides in the cell membrane. In terms of biological role, part of the binding-protein-dependent transport system for heme-iron. Responsible for the translocation of the substrate across the membrane. In Staphylococcus aureus (strain NCTC 8325 / PS 47), this protein is Probable heme-iron transport system permease protein IsdF (isdF).